We begin with the raw amino-acid sequence, 386 residues long: Glyceraldehyde-3-phosphate dehydrogenase, chloroplastic (386 aa).

A chloroplast-targeting transit peptide spans M1–T45. NADP(+) contacts are provided by residues R58 to I59 and R125. Residues S197–T199, T228, T257–G258, and R280 contribute to the D-glyceraldehyde 3-phosphate site. C198 functions as the Nucleophile in the catalytic mechanism. NADP(+) is bound at residue N362.

It belongs to the glyceraldehyde-3-phosphate dehydrogenase family. Homotetramer.

It is found in the plastid. Its subcellular location is the chloroplast. It catalyses the reaction D-glyceraldehyde 3-phosphate + phosphate + NADP(+) = (2R)-3-phospho-glyceroyl phosphate + NADPH + H(+). The enzyme catalyses D-glyceraldehyde 3-phosphate + phosphate + NAD(+) = (2R)-3-phospho-glyceroyl phosphate + NADH + H(+). Its pathway is carbohydrate biosynthesis; Calvin cycle. In Guillardia theta (Cryptophyte), this protein is Glyceraldehyde-3-phosphate dehydrogenase, chloroplastic (GAPC1).